The primary structure comprises 406 residues: Protease ElaD (406 aa).

Residue H234 is part of the active site. The active-site Nucleophile is the C316.

It belongs to the peptidase C79 family.

Its function is as follows. Protease that can act as an efficient and specific deubiquitinating enzyme in vitro. Does not possess desumoylating and deneddylating activities. The physiological substrate is unknown. The polypeptide is Protease ElaD (elaD) (Escherichia coli O139:H28 (strain E24377A / ETEC)).